Consider the following 122-residue polypeptide: Large ribosomal subunit protein bL12 (122 aa).

The protein belongs to the bacterial ribosomal protein bL12 family. As to quaternary structure, homodimer. Part of the ribosomal stalk of the 50S ribosomal subunit. Forms a multimeric L10(L12)X complex, where L10 forms an elongated spine to which 2 to 4 L12 dimers bind in a sequential fashion. Binds GTP-bound translation factors.

Forms part of the ribosomal stalk which helps the ribosome interact with GTP-bound translation factors. Is thus essential for accurate translation. This is Large ribosomal subunit protein bL12 from Mycoplasma capricolum subsp. capricolum (strain California kid / ATCC 27343 / NCTC 10154).